A 152-amino-acid polypeptide reads, in one-letter code: Ribosome maturation factor RimP (152 aa).

This sequence belongs to the RimP family.

It localises to the cytoplasm. Functionally, required for maturation of 30S ribosomal subunits. The chain is Ribosome maturation factor RimP from Pseudoalteromonas atlantica (strain T6c / ATCC BAA-1087).